Reading from the N-terminus, the 70-residue chain is Small ribosomal subunit protein bS21 (70 aa).

Belongs to the bacterial ribosomal protein bS21 family.

This is Small ribosomal subunit protein bS21 (rpsU) from Helicobacter pylori (strain J99 / ATCC 700824) (Campylobacter pylori J99).